A 471-amino-acid polypeptide reads, in one-letter code: Tryptophanase (471 aa).

K5, K115, and K156 each carry N6-acetyllysine. K270 bears the N6-(pyridoxal phosphate)lysine mark. K450 bears the N6-acetyllysine mark.

This sequence belongs to the beta-eliminating lyase family. In terms of assembly, homotetramer. It depends on pyridoxal 5'-phosphate as a cofactor.

The enzyme catalyses L-tryptophan + H2O = indole + pyruvate + NH4(+). Its pathway is amino-acid degradation; L-tryptophan degradation via pyruvate pathway; indole and pyruvate from L-tryptophan: step 1/1. The chain is Tryptophanase from Escherichia coli O139:H28 (strain E24377A / ETEC).